The sequence spans 200 residues: Cysteine dioxygenase type 1 (200 aa).

Residues His-86, His-88, and His-140 each coordinate Fe cation. The segment at residues 93–157 (CFLKMLQGNL…TEPAVSLHLY (65 aa)) is a cross-link (3'-(S-cysteinyl)-tyrosine (Cys-Tyr)).

It belongs to the cysteine dioxygenase family. As to quaternary structure, monomer. Fe cation serves as cofactor. Requires Ni(2+) as cofactor. Zn(2+) is required as a cofactor. In terms of processing, the thioether cross-link between Cys-93 and Tyr-157 plays a structural role through stabilizing the Fe(2+) ion, and prevents the production of highly damaging free hydroxyl radicals by holding the oxygen radical via hydroxyl hydrogen.

It carries out the reaction L-cysteine + O2 = 3-sulfino-L-alanine + H(+). It participates in organosulfur biosynthesis; taurine biosynthesis; hypotaurine from L-cysteine: step 1/2. Its function is as follows. Catalyzes the oxidation of cysteine to cysteine sulfinic acid with addition of molecular dioxygen. In Bos taurus (Bovine), this protein is Cysteine dioxygenase type 1 (CDO1).